Consider the following 360-residue polypeptide: Peptide chain release factor 1 (360 aa).

Glutamine 236 is modified (N5-methylglutamine).

It belongs to the prokaryotic/mitochondrial release factor family. Post-translationally, methylated by PrmC. Methylation increases the termination efficiency of RF1.

Its subcellular location is the cytoplasm. Peptide chain release factor 1 directs the termination of translation in response to the peptide chain termination codons UAG and UAA. The polypeptide is Peptide chain release factor 1 (Limosilactobacillus fermentum (strain NBRC 3956 / LMG 18251) (Lactobacillus fermentum)).